We begin with the raw amino-acid sequence, 913 residues long: Vacuolar membrane protease (913 aa).

Residues Met-1–Thr-15 lie on the Cytoplasmic side of the membrane. Residues Thr-16–Ala-36 traverse the membrane as a helical segment. The Vacuolar segment spans residues Asn-37 to Tyr-364. Asn-117 carries an N-linked (GlcNAc...) asparagine glycan. His-152 and Asp-164 together coordinate Zn(2+). Catalysis depends on Glu-196, which acts as the Proton acceptor. Residues Glu-197, Glu-222, and His-296 each coordinate Zn(2+). The chain crosses the membrane as a helical span at residues Val-365–Cys-385. Residues Asn-386 to Pro-394 lie on the Cytoplasmic side of the membrane. The chain crosses the membrane as a helical span at residues Thr-395 to Phe-415. Residues Thr-416–Asn-431 lie on the Vacuolar side of the membrane. The chain crosses the membrane as a helical span at residues Phe-432–Ala-452. The Cytoplasmic segment spans residues Leu-453–Thr-465. Residues Leu-466 to Leu-486 form a helical membrane-spanning segment. Residues Ser-487–Thr-494 lie on the Vacuolar side of the membrane. The helical transmembrane segment at Gly-495–Cys-515 threads the bilayer. The Cytoplasmic portion of the chain corresponds to Ser-516–Tyr-600. The segment covering Asn-540–Glu-552 has biased composition (basic and acidic residues). Residues Asn-540–Ser-578 are disordered. Positions Thr-557–Pro-566 are enriched in polar residues. The segment covering Ser-567 to Ser-578 has biased composition (low complexity). The chain crosses the membrane as a helical span at residues Leu-601–Ala-621. The Vacuolar segment spans residues Leu-622–Glu-634. A helical membrane pass occupies residues Ala-635–Thr-655. Residues Thr-656–Arg-660 are Cytoplasmic-facing. Residues Phe-661–Ala-681 traverse the membrane as a helical segment. Topologically, residues Pro-682–Leu-913 are vacuolar. N-linked (GlcNAc...) asparagine glycosylation is found at Asn-729, Asn-794, and Asn-810.

The protein belongs to the peptidase M28 family. The cofactor is Zn(2+).

The protein resides in the vacuole membrane. May be involved in vacuolar sorting and osmoregulation. The chain is Vacuolar membrane protease from Kluyveromyces lactis (strain ATCC 8585 / CBS 2359 / DSM 70799 / NBRC 1267 / NRRL Y-1140 / WM37) (Yeast).